The chain runs to 255 residues: Type III pantothenate kinase (255 aa).

Asp-6–Val-13 contributes to the ATP binding site. Substrate-binding positions include Tyr-100 and Gly-107–Arg-110. Asp-109 (proton acceptor) is an active-site residue. Asp-129 lines the K(+) pocket. Residue Thr-132 participates in ATP binding. Residue Thr-184 participates in substrate binding.

This sequence belongs to the type III pantothenate kinase family. As to quaternary structure, homodimer. The cofactor is NH4(+). Requires K(+) as cofactor.

Its subcellular location is the cytoplasm. It carries out the reaction (R)-pantothenate + ATP = (R)-4'-phosphopantothenate + ADP + H(+). Its pathway is cofactor biosynthesis; coenzyme A biosynthesis; CoA from (R)-pantothenate: step 1/5. In terms of biological role, catalyzes the phosphorylation of pantothenate (Pan), the first step in CoA biosynthesis. This is Type III pantothenate kinase from Geobacter sulfurreducens (strain ATCC 51573 / DSM 12127 / PCA).